The chain runs to 172 residues: S-ribosylhomocysteine lyase (172 aa).

Residues histidine 54, histidine 58, and cysteine 128 each contribute to the Fe cation site.

Belongs to the LuxS family. In terms of assembly, homodimer. It depends on Fe cation as a cofactor.

It catalyses the reaction S-(5-deoxy-D-ribos-5-yl)-L-homocysteine = (S)-4,5-dihydroxypentane-2,3-dione + L-homocysteine. Involved in the synthesis of autoinducer 2 (AI-2) which is secreted by bacteria and is used to communicate both the cell density and the metabolic potential of the environment. The regulation of gene expression in response to changes in cell density is called quorum sensing. Catalyzes the transformation of S-ribosylhomocysteine (RHC) to homocysteine (HC) and 4,5-dihydroxy-2,3-pentadione (DPD). The sequence is that of S-ribosylhomocysteine lyase from Aliivibrio fischeri (strain MJ11) (Vibrio fischeri).